The following is a 338-amino-acid chain: D-erythrose-4-phosphate dehydrogenase (338 aa).

11–12 serves as a coordination point for NAD(+); sequence RI. Substrate-binding positions include 153–155, Arg-199, 212–213, and Arg-235; these read SCT and TK. The Nucleophile role is filled by Cys-154. Position 317 (Asn-317) interacts with NAD(+).

The protein belongs to the glyceraldehyde-3-phosphate dehydrogenase family. Epd subfamily. Homotetramer.

It is found in the cytoplasm. The catalysed reaction is D-erythrose 4-phosphate + NAD(+) + H2O = 4-phospho-D-erythronate + NADH + 2 H(+). It functions in the pathway cofactor biosynthesis; pyridoxine 5'-phosphate biosynthesis; pyridoxine 5'-phosphate from D-erythrose 4-phosphate: step 1/5. Catalyzes the NAD-dependent conversion of D-erythrose 4-phosphate to 4-phosphoerythronate. The sequence is that of D-erythrose-4-phosphate dehydrogenase from Shewanella sp. (strain MR-4).